The chain runs to 466 residues: Soluble pyridine nucleotide transhydrogenase (466 aa).

Residue 36-45 (ERYHQVGGGC) coordinates FAD.

It belongs to the class-I pyridine nucleotide-disulfide oxidoreductase family. FAD serves as cofactor.

Its subcellular location is the cytoplasm. The catalysed reaction is NAD(+) + NADPH = NADH + NADP(+). Conversion of NADPH, generated by peripheral catabolic pathways, to NADH, which can enter the respiratory chain for energy generation. The sequence is that of Soluble pyridine nucleotide transhydrogenase from Colwellia psychrerythraea (strain 34H / ATCC BAA-681) (Vibrio psychroerythus).